Consider the following 349-residue polypeptide: Prostaglandin reductase 1 (349 aa).

Residue T18 is modified to Phosphothreonine. S20 is modified (phosphoserine). NADP(+) is bound by residues 152 to 155 (GAVG), K178, Y193, N217, 239 to 245 (CGAISMY), 270 to 272 (FIF), and N321. Residue K178 is modified to N6-(2-hydroxyisobutyryl)lysine; alternate. K178 is subject to N6-acetyllysine; alternate.

The protein belongs to the NADP-dependent oxidoreductase L4BD family. In terms of assembly, monomer or homodimer.

Its subcellular location is the cytoplasm. It catalyses the reaction 13,14-dihydro-15-oxo-prostaglandin E1 + NADP(+) = 15-oxoprostaglandin E1 + NADPH + H(+). The enzyme catalyses 13,14-dihydro-15-oxo-prostaglandin E2 + NADP(+) = 15-oxoprostaglandin E2 + NADPH + H(+). It carries out the reaction 13,14-dihydro-15-oxo-prostaglandin F1alpha + NADP(+) = 15-oxoprostaglandin F1alpha + NADPH + H(+). The catalysed reaction is 13,14-dihydro-15-oxo-PGF2alpha + NADP(+) = 15-oxoprostaglandin F2alpha + NADPH + H(+). It catalyses the reaction leukotriene B4 + NADP(+) = 12-oxo-leukotriene B4 + NADPH + H(+). The enzyme catalyses 20-hydroxy-leukotriene B4 + NADP(+) = 12-oxo-20-hydroxy-leukotriene B4 + NADPH + H(+). It carries out the reaction 6-trans-leukotriene B4 + NADP(+) = 12-oxo-(5S)-hydroxy-(6E,8E,10E,14Z)-eicosatetraenoate + NADPH + H(+). The catalysed reaction is (5S,12S)-dihydroxy-(6E,10E,12E,14Z)-eicosatetraenoate + NADP(+) = 12-oxo-(5S)-hydroxy-(6E,8E,10E,14Z)-eicosatetraenoate + NADPH + H(+). It catalyses the reaction an n-alkanal + NADP(+) = an alk-2-enal + NADPH + H(+). The enzyme catalyses hexanal + NADP(+) = (E)-hex-2-enal + NADPH + H(+). It carries out the reaction octanal + NADP(+) = (2E)-octenal + NADPH + H(+). The catalysed reaction is decanal + NADP(+) = (2E)-decenal + NADPH + H(+). It catalyses the reaction dodecanal + NADP(+) = (2E)-dodecenal + NADPH + H(+). The enzyme catalyses 4-hydroxynonanal + NADP(+) = (E)-4-hydroxynon-2-enal + NADPH + H(+). It carries out the reaction pentan-2-one + NADP(+) = (E)-pent-3-en-2-one + NADPH + H(+). The catalysed reaction is nonan-2-one + NADP(+) = (3E)-nonen-2-one + NADPH + H(+). NAD(P)H-dependent oxidoreductase involved in metabolic inactivation of pro- and anti-inflammatory eicosanoids: prostaglandins (PG), leukotrienes (LT) and lipoxins (LX). Catalyzes with high efficiency the reduction of the 13,14 double bond of 15-oxoPGs, including 15-oxo-PGE1, 15-oxo-PGE2, 15-oxo-PGF1-alpha and 15-oxo-PGF2-alpha. Catalyzes with lower efficiency the oxidation of the hydroxyl group at C12 of LTB4 and its derivatives, converting them into biologically less active 12-oxo-LTB4 metabolites. Reduces 15-oxo-LXA4 to 13,14 dihydro-15-oxo-LXA4, enhancing neutrophil recruitment at the inflammatory site. Plays a role in metabolic detoxification of alkenals and ketones. Reduces alpha,beta-unsaturated alkenals and ketones, particularly those with medium-chain length, showing highest affinity toward (2E)-decenal and (3E)-3-nonen-2-one. May inactivate 4-hydroxy-2-nonenal, a cytotoxic lipid constituent of oxidized low-density lipoprotein particles. The protein is Prostaglandin reductase 1 (PTGR1) of Oryctolagus cuniculus (Rabbit).